A 38-amino-acid polypeptide reads, in one-letter code: Photosystem II reaction center protein X (38 aa).

A helical membrane pass occupies residues 9 to 29; that stretch reads IASLFAGAFIALAIGGVLVFI.

This sequence belongs to the PsbX family. Type 1 subfamily. As to quaternary structure, PSII is composed of 1 copy each of membrane proteins PsbA, PsbB, PsbC, PsbD, PsbE, PsbF, PsbH, PsbI, PsbJ, PsbK, PsbL, PsbM, PsbT, PsbX, PsbY, PsbZ, Psb30/Ycf12, at least 3 peripheral proteins of the oxygen-evolving complex and a large number of cofactors. It forms dimeric complexes.

The protein resides in the plastid. It localises to the chloroplast thylakoid membrane. Involved in the binding and/or turnover of quinones at the Q(B) site of photosystem II (PSII). PSII is a light-driven water plastoquinone oxidoreductase, using light energy to abstract electrons from H(2)O, generating a proton gradient subsequently used for ATP formation. In Phaeodactylum tricornutum (strain CCAP 1055/1), this protein is Photosystem II reaction center protein X.